A 291-amino-acid polypeptide reads, in one-letter code: ATP synthase gamma chain (291 aa).

It belongs to the ATPase gamma chain family. As to quaternary structure, F-type ATPases have 2 components, CF(1) - the catalytic core - and CF(0) - the membrane proton channel. CF(1) has five subunits: alpha(3), beta(3), gamma(1), delta(1), epsilon(1). CF(0) has three main subunits: a, b and c.

It is found in the cell inner membrane. Its function is as follows. Produces ATP from ADP in the presence of a proton gradient across the membrane. The gamma chain is believed to be important in regulating ATPase activity and the flow of protons through the CF(0) complex. The sequence is that of ATP synthase gamma chain from Rhodopseudomonas palustris (strain HaA2).